We begin with the raw amino-acid sequence, 125 residues long: Mesotocin-neurophysin MT (125 aa).

The first 19 residues, methionine 1–alanine 19, serve as a signal peptide directing secretion. Cysteine 20 and cysteine 25 are joined by a disulfide. Glycine 28 carries the glycine amide modification. Intrachain disulfides connect cysteine 42-cysteine 86, cysteine 45-cysteine 59, cysteine 53-cysteine 76, cysteine 60-cysteine 66, cysteine 93-cysteine 106, cysteine 100-cysteine 118, and cysteine 107-cysteine 112.

This sequence belongs to the vasopressin/oxytocin family. As to expression, mesotocin is produced by magnocellular preoptic neurons in the hypothalamus in amphibians, reptiles and birds.

The protein resides in the secreted. Functionally, mesotocin is a diuretic hormone. This is Mesotocin-neurophysin MT from Bufo japonicus (Japanese common toad).